The chain runs to 559 residues: Actin-binding protein WASF1 (559 aa).

Disordered regions lie at residues 169–202, 307–400, and 412–492; these read TEDKRKEKRKQKQKNLDRPHEPEKVPRAPHDRRR, RPQS…SPPV, and VHPL…STLP. A compositionally biased stretch (basic and acidic residues) spans 182–202; it reads KNLDRPHEPEKVPRAPHDRRR. Pro residues predominate over residues 322–332; that stretch reads PTPPPPPPPLP. Over residues 333-346 the composition is skewed to low complexity; that stretch reads SALSTSSLRASMTS. The residue at position 341 (R341) is an Asymmetric dimethylarginine; alternate. An Omega-N-methylarginine; alternate modification is found at R341. Composition is skewed to pro residues over residues 347-374, 384-399, 423-437, and 458-477; these read TPPPPVPPPPPPPAPALQAPAVPPPPAP, PAPPPIAPPLVQPSPP, LPPPPPPPPLPPPGI, and TPSPAPGPHAPLMPPSPPSQ. S489 is modified (phosphoserine). The WH2 domain occupies 497-514; sequence ARSVLLEAIRKGIQLRKV.

This sequence belongs to the SCAR/WAVE family. In terms of assembly, component of the WAVE1 complex composed of ABI2, CYFIP1 or CYFIP2, BRK1, NCKAP1 and WASF1/WAVE1. Within the complex, a heterodimer containing NCKAP1 and CYFIP1 interacts with a heterotrimer formed by WAVE1, ABI2 and BRK1. CYFIP2 binds to activated RAC1 which causes the complex to dissociate, releasing activated WASF1. The complex can also be activated by NCK1. Binds actin and the Arp2/3 complex. Interacts with BAIAP2. Interacts with SHANK3; the interaction mediates the association of SHANK3 with the WAVE1 complex. Interacts with ABI1 (via N-terminus). Interacts with SORBS2; this interaction greatly enhances phosphorylation by ABL1 and dephosphorylation by PTPN12 and might mediate partial to focal adhesion sites. As to expression, expressed in hippocampal neurons (at protein level).

It is found in the cytoplasm. Its subcellular location is the cytoskeleton. The protein localises to the synapse. It localises to the cell junction. The protein resides in the focal adhesion. Downstream effector molecule involved in the transmission of signals from tyrosine kinase receptors and small GTPases to the actin cytoskeleton. Promotes formation of actin filaments. Part of the WAVE complex that regulates lamellipodia formation. The WAVE complex regulates actin filament reorganization via its interaction with the Arp2/3 complex. As component of the WAVE1 complex, required for BDNF-NTRK2 endocytic trafficking and signaling from early endosomes. Also involved in the regulation of mitochondrial dynamics. The protein is Actin-binding protein WASF1 (Wasf1) of Rattus norvegicus (Rat).